Consider the following 162-residue polypeptide: NADH-quinone oxidoreductase subunit I (162 aa).

4Fe-4S ferredoxin-type domains are found at residues 53–83 (LRRY…IEAE) and 93–122 (TRYD…EGPN). Positions 63, 66, 69, 73, 102, 105, 108, and 112 each coordinate [4Fe-4S] cluster.

It belongs to the complex I 23 kDa subunit family. As to quaternary structure, NDH-1 is composed of 14 different subunits. Subunits NuoA, H, J, K, L, M, N constitute the membrane sector of the complex. It depends on [4Fe-4S] cluster as a cofactor.

It is found in the cell inner membrane. The enzyme catalyses a quinone + NADH + 5 H(+)(in) = a quinol + NAD(+) + 4 H(+)(out). Its function is as follows. NDH-1 shuttles electrons from NADH, via FMN and iron-sulfur (Fe-S) centers, to quinones in the respiratory chain. The immediate electron acceptor for the enzyme in this species is believed to be ubiquinone. Couples the redox reaction to proton translocation (for every two electrons transferred, four hydrogen ions are translocated across the cytoplasmic membrane), and thus conserves the redox energy in a proton gradient. The protein is NADH-quinone oxidoreductase subunit I of Granulibacter bethesdensis (strain ATCC BAA-1260 / CGDNIH1).